Consider the following 428-residue polypeptide: Serine--tRNA ligase (428 aa).

235–237 (TAE) serves as a coordination point for L-serine. 266-268 (RSE) contributes to the ATP binding site. Glutamate 289 is a binding site for L-serine. 353-356 (EISS) contacts ATP. Serine 389 is an L-serine binding site.

This sequence belongs to the class-II aminoacyl-tRNA synthetase family. Type-1 seryl-tRNA synthetase subfamily. As to quaternary structure, homodimer. The tRNA molecule binds across the dimer.

It localises to the cytoplasm. It catalyses the reaction tRNA(Ser) + L-serine + ATP = L-seryl-tRNA(Ser) + AMP + diphosphate + H(+). The catalysed reaction is tRNA(Sec) + L-serine + ATP = L-seryl-tRNA(Sec) + AMP + diphosphate + H(+). The protein operates within aminoacyl-tRNA biosynthesis; selenocysteinyl-tRNA(Sec) biosynthesis; L-seryl-tRNA(Sec) from L-serine and tRNA(Sec): step 1/1. Functionally, catalyzes the attachment of serine to tRNA(Ser). Is also able to aminoacylate tRNA(Sec) with serine, to form the misacylated tRNA L-seryl-tRNA(Sec), which will be further converted into selenocysteinyl-tRNA(Sec). This Shewanella frigidimarina (strain NCIMB 400) protein is Serine--tRNA ligase.